The chain runs to 492 residues: Xaa-Pro dipeptidase (492 aa).

Alanine 2 carries the N-acetylalanine modification. Serine 167 carries the post-translational modification Phosphoserine. A dipeptide is bound at residue histidine 255. Residues aspartate 276, aspartate 287, and histidine 370 each contribute to the Mn(2+) site. Aspartate 287 is an a dipeptide binding site. Residues histidine 377 and arginine 398 each contribute to the a dipeptide site. 2 residues coordinate Mn(2+): glutamate 412 and glutamate 452.

This sequence belongs to the peptidase M24B family. Eukaryotic-type prolidase subfamily. In terms of assembly, homodimer. Requires Mn(2+) as cofactor.

The catalysed reaction is Xaa-L-Pro dipeptide + H2O = an L-alpha-amino acid + L-proline. In terms of biological role, dipeptidase that catalyzes the hydrolysis of dipeptides with a prolyl (Xaa-Pro) or hydroxyprolyl residue in the C-terminal position. The preferred dipeptide substrate is Gly-Pro, but other Xaa-Pro dipeptides, such as Ala-Pro, Met-Pro, Phe-Pro, Val-Pro and Leu-Pro, can be cleaved. Plays an important role in collagen metabolism because the high level of iminoacids in collagen. The protein is Xaa-Pro dipeptidase (Pepd) of Rattus norvegicus (Rat).